We begin with the raw amino-acid sequence, 145 residues long: MFFGTFNHAIDAKGRTSLPAKFREALAAAGEPRIVLMQYPHWRAVQALPQSVWNELVKKVMEASPLDARWQRNVLKFVSSAHEVDLDVHGRVLVPPPLREWAGLQKDVVWVGMGRTIHLYDRAAYDEQMSAEIPADQVVDFFRTA.

SpoVT-AbrB domains are found at residues Thr-5–Gln-50 and Ala-81–Ala-124.

It belongs to the MraZ family. Forms oligomers.

Its subcellular location is the cytoplasm. The protein localises to the nucleoid. This is Transcriptional regulator MraZ from Anaeromyxobacter dehalogenans (strain 2CP-1 / ATCC BAA-258).